A 112-amino-acid chain; its full sequence is Colipase (112 aa).

The first 17 residues, 1–17 (MEKILILLLVALSVAYA), serve as a signal peptide directing secretion. Positions 18–22 (APGPR) are cleaved as a propeptide — enterostatin, activation peptide. Intrachain disulfides connect cysteine 34/cysteine 45, cysteine 40/cysteine 56, cysteine 44/cysteine 78, cysteine 66/cysteine 86, and cysteine 80/cysteine 104.

It belongs to the colipase family. As to quaternary structure, forms a 1:1 stoichiometric complex with pancreatic lipase. As to expression, expressed by the pancreas.

The protein resides in the secreted. Colipase is a cofactor of pancreatic lipase. It allows the lipase to anchor itself to the lipid-water interface. Without colipase the enzyme is washed off by bile salts, which have an inhibitory effect on the lipase. Functionally, enterostatin has a biological activity as a satiety signal. The protein is Colipase of Homo sapiens (Human).